A 900-amino-acid chain; its full sequence is DNA mismatch repair protein MutS (900 aa).

637–644 is a binding site for ATP; the sequence is GPNMAGKS.

It belongs to the DNA mismatch repair MutS family.

Functionally, this protein is involved in the repair of mismatches in DNA. It is possible that it carries out the mismatch recognition step. This protein has a weak ATPase activity. The chain is DNA mismatch repair protein MutS from Methanosarcina barkeri (strain Fusaro / DSM 804).